We begin with the raw amino-acid sequence, 464 residues long: Lysosomal proton-coupled steroid conjugate and bile acid symporter SLC46A3 (464 aa).

An N-terminal signal peptide occupies residues 1–26 (MRKVLLVEPVIFIYIFASSLTSPVVQ). At 27–71 (QFIYRKLWEEEYNSTAISSDNSSHCERNKSSPTYVMEKAIQEKTS) the chain is on the extracellular side. Asn-39, Asn-47, and Asn-54 each carry an N-linked (GlcNAc...) asparagine glycan. Residues 72 to 92 (FFNMQLDLTGAVPSLIVAFII) traverse the membrane as a helical segment. Over 93–104 (VANGDHQGRKKS) the chain is Cytoplasmic. A helical membrane pass occupies residues 105–125 (LVLPSIGALIADIFLTIVSYF). The Extracellular portion of the chain corresponds to 126–130 (SWPTS). The helical transmembrane segment at 131-151 (VLFLATFISGLFGSMATFLGG) threads the bilayer. At 152–171 (GFAYIADQCHDEKQKTTRIA) the chain is on the cytoplasmic side. A helical transmembrane segment spans residues 172–192 (VIDLIFGVVSGLAGLSSGYFL). Topologically, residues 193–198 (REMGFT) are extracellular. The chain crosses the membrane as a helical span at residues 199-219 (WTFATASLLHVVNIIYITFFL). At 220–259 (QDTVHISEFQQQAPLSYKEHLKETFSGVYMLFKTAPSKKR) the chain is on the cytoplasmic side. Residues 260-280 (ILIIVLLFIFMTYLFTMFGGS) form a helical membrane-spanning segment. At 281–296 (SLFTLYELDEPLCWTE) the chain is on the extracellular side. A helical transmembrane segment spans residues 297–317 (VYIGYGAAAFTSISLTSFLGV). Topologically, residues 318 to 326 (YLFSKCLKD) are cytoplasmic. Residues 327-347 (IYIVFIGIFSYIGGIVMAAFA) form a helical membrane-spanning segment. The Extracellular segment spans residues 348–349 (KT). A helical membrane pass occupies residues 350-370 (TLLMFLVRVPSLFSIMPIPVL). Residues 371–384 (RSMLSKVVLPSEQG) lie on the Cytoplasmic side of the membrane. The helical transmembrane segment at 385-405 (AVFACIACLEVLTGTISLSVF) threads the bilayer. Residues 406–418 (NVIYAATVAWFSG) are Extracellular-facing. The chain crosses the membrane as a helical span at residues 419 to 439 (FSFLLSASLCLIPLGVLCWLL). At 440–464 (CTSWNGEDLALLVPEEVSSIDSVDS) the chain is on the cytoplasmic side.

The protein belongs to the major facilitator superfamily. SLC46A family.

The protein resides in the lysosome membrane. The catalysed reaction is estrone 3-sulfate(out) + n H(+)(out) = estrone 3-sulfate(in) + n H(+)(in). It carries out the reaction 25-hydroxyvitamin D3 sulfate(out) + n H(+)(out) = 25-hydroxyvitamin D3 sulfate(in) + n H(+)(in). The enzyme catalyses cholate(out) + n H(+)(out) = cholate(in) + n H(+)(in). It catalyses the reaction glycocholate(out) + n H(+)(out) = glycocholate(in) + n H(+)(in). The catalysed reaction is taurocholate(out) + n H(+)(out) = taurocholate(in) + n H(+)(in). It carries out the reaction dehydroepiandrosterone 3-sulfate(out) + n H(+)(out) = dehydroepiandrosterone 3-sulfate(in) + n H(+)(in). Its function is as follows. Lysosomal proton-coupled steroid conjugate and bile acid transporter. Preferentially recognizes lipophilic steroid conjugates or bile acis as endogenous substrates and seems to mediate escape from lysosomes to the cytoplasm. Modulates hepatic cytosolic copper homeostasis, maybe acting as a lysosomal copper transporter and sequestering copper ions in the lysosome. This chain is Lysosomal proton-coupled steroid conjugate and bile acid symporter SLC46A3 (SLC46A3), found in Gallus gallus (Chicken).